The chain runs to 243 residues: Glycerophosphodiester phosphodiesterase (243 aa).

The 237-residue stretch at 3-239 (TLVIAHRGDS…DDPETLINLV (237 aa)) folds into the GP-PDE domain. His-8 (proton acceptor) is an active-site residue. Residues Glu-35 and Asp-37 each coordinate Ca(2+). His-50 acts as the Proton donor in catalysis. Residue Glu-110 participates in Ca(2+) binding.

Belongs to the glycerophosphoryl diester phosphodiesterase family. As to quaternary structure, homodimer. It depends on Mg(2+) as a cofactor. The cofactor is Ca(2+).

It catalyses the reaction a sn-glycero-3-phosphodiester + H2O = an alcohol + sn-glycerol 3-phosphate + H(+). It carries out the reaction sn-glycerol 3-phosphocholine + H2O = sn-glycerol 3-phosphate + choline + H(+). With respect to regulation, inhibited by EDTA. Functionally, glycerophosphodiester phosphodiesterase hydrolyzes glycerophosphodiesters into glycerol-3-phosphate (G3P) and the corresponding alcohol. Can use glycerophosphocholine. This chain is Glycerophosphodiester phosphodiesterase, found in Caldanaerobacter subterraneus subsp. tengcongensis (strain DSM 15242 / JCM 11007 / NBRC 100824 / MB4) (Thermoanaerobacter tengcongensis).